We begin with the raw amino-acid sequence, 289 residues long: 4-hydroxy-tetrahydrodipicolinate synthase (289 aa).

Thr-43 is a pyruvate binding site. Tyr-131 serves as the catalytic Proton donor/acceptor. Residue Lys-160 is the Schiff-base intermediate with substrate of the active site. Residue Val-200 coordinates pyruvate.

The protein belongs to the DapA family. In terms of assembly, homotetramer; dimer of dimers.

The protein localises to the cytoplasm. The catalysed reaction is L-aspartate 4-semialdehyde + pyruvate = (2S,4S)-4-hydroxy-2,3,4,5-tetrahydrodipicolinate + H2O + H(+). It participates in amino-acid biosynthesis; L-lysine biosynthesis via DAP pathway; (S)-tetrahydrodipicolinate from L-aspartate: step 3/4. Its function is as follows. Catalyzes the condensation of (S)-aspartate-beta-semialdehyde [(S)-ASA] and pyruvate to 4-hydroxy-tetrahydrodipicolinate (HTPA). In Methanococcus maripaludis (strain C6 / ATCC BAA-1332), this protein is 4-hydroxy-tetrahydrodipicolinate synthase.